A 530-amino-acid polypeptide reads, in one-letter code: Tetrahydroberberine oxidase (530 aa).

The signal sequence occupies residues 1-24; the sequence is MSKMASSIFATFSLLSSLLPTSLA. Residues Cys36 and Cys94 are joined by a disulfide bond. An N-linked (GlcNAc...) asparagine glycan is attached at Asn51. The region spanning 72–246 is the FAD-binding PCMH-type domain; that stretch reads TTPKPNFIVT…LAWKIRLVPV (175 aa). The segment at residues 109–171 is a cross-link (6-(S-cysteinyl)-8alpha-(pros-histidyl)-FAD (His-Cys)); sequence HDFEGLSYVS…GVHAFPAGLC (63 aa). Asn483 carries an N-linked (GlcNAc...) asparagine glycan.

Belongs to the oxygen-dependent FAD-linked oxidoreductase family. It depends on FAD as a cofactor. In terms of processing, the FAD cofactor is bound via a bicovalent 6-S-cysteinyl, 8alpha-N1-histidyl FAD linkage.

The enzyme catalyses (S)-canadine + 2 O2 + H(+) = berberine + 2 H2O2. Its function is as follows. Catalyzes the oxidation of different tetrahydroprotoberberines, such as (S)-canadine, (S)-scoulerine and (S)-corypalmine. Catalyzes the oxidation of (S)-coreximine and (S)-tetrahydropalmatine. Catalyzes the oxidation of different 1-benzylisoquinoline alkaloids, such as (S)-norreticuline, (S)-nororientaline, (S)-coclaurine and (S)-norisoorientaline. Exhibits strict specificity for the (S)-enantiomer of tetrahydroprotoberbirines and 1-benzylisoquinoline alkaloids. The chain is Tetrahydroberberine oxidase from Berberis wilsoniae (Mrs Wilson's barberry).